The sequence spans 598 residues: MALRCPIVSVLGHVDHGKTSLLDKIRRTRVTQREAGGITQHIGASEIPINTIKKVSKDLLGLFKADLSIPGILVIDTPGHEAFTSLRKRGGALADIAILVVDINEGFKPQTIEAINILKQCKTPFVVAANKVDRIPGWNSSEGPFILNFNEKNQHPNAMTEFEIRLYENVIKHLNELGFDADLFSRVKDTTKTINVVPVSAMTGEGIPDLLVIISGLAQKFLEQKLALNVEGYAKGTVLELKEEKGLGKTIDAIIYDGIAKTGDFLVVGNPDGVLVTKIKALLKPKELDEMRDPKDKFKPSKQISAATGVKISAPDLDNVIAGSPLRIVPKDQVDAAKEEVLQEVEEFTILTDDEGIIIKADTMGSLEALANELRKVKAKIKKAEVGDISKKEVIEASSYASTNPLNGLIISFNTKVLADAKVEIEKSDVKLLEGKIIYKLVEEYEDWIKEMEELLKSDEINRLTKPAMIKILPNCIFRQKEPAVCGVEVLYGTLKIGSPIMSEDGKKLGYVKEMRDNQQENIKEAKVGMQVPVSIDGNIVLSRNAKENDILYVEVPEPEARKLHHEFKDELRGDEKEALSRYMELKQKIENNIFWGM.

The tr-type G domain occupies 3–225 (LRCPIVSVLG…GLAQKFLEQK (223 aa)). Residues 12–19 (GHVDHGKT) are G1. Position 12–19 (12–19 (GHVDHGKT)) interacts with GTP. A G2 region spans residues 37-41 (GITQH). Residues 76 to 79 (DTPG) form a G3 region. GTP is bound by residues 76–80 (DTPGH) and 130–133 (NKVD). Positions 130–133 (NKVD) are G4. The interval 200–202 (SAM) is G5.

This sequence belongs to the TRAFAC class translation factor GTPase superfamily. Classic translation factor GTPase family. IF-2 subfamily.

Functionally, function in general translation initiation by promoting the binding of the formylmethionine-tRNA to ribosomes. Seems to function along with eIF-2. In Methanococcus maripaludis (strain C7 / ATCC BAA-1331), this protein is Probable translation initiation factor IF-2.